We begin with the raw amino-acid sequence, 357 residues long: Inner membrane protein YcfT (357 aa).

At 1 to 12 (MKQKELWINQIK) the chain is on the cytoplasmic side. Residues 13 to 33 (GLCICLVVIYHSVITFYPHLT) traverse the membrane as a helical segment. The Periplasmic segment spans residues 34 to 49 (TFQHPLSEVLSKCWIY). Residues 50 to 70 (FNLYLAPFRMPVFFFISGYLI) traverse the membrane as a helical segment. Over 71 to 86 (RRYIDSVPWGNCLDKR) the chain is Cytoplasmic. The helical transmembrane segment at 87-107 (IWNIFWVLALWGVVQWLALSA) threads the bilayer. The Periplasmic segment spans residues 108–135 (LNQWLAPERDLSNASNAAYADSTGEFLH). The helical transmembrane segment at 136–156 (GMITASTSLWYLYALIVYFVV) threads the bilayer. Over 157-162 (CKIFSR) the chain is Cytoplasmic. The chain crosses the membrane as a helical span at residues 163 to 183 (LALPLFALFVLLSVAVNFVPT). Topologically, residues 184 to 196 (PWWGMNSVIRNLP) are periplasmic. A helical transmembrane segment spans residues 197–217 (YYSLGAWFGATIMTCVKEVPL). Over 218-231 (RRHLLMASLLTVLA) the chain is Cytoplasmic. A helical transmembrane segment spans residues 232–252 (VGAWLFTISLLLSLVSIVVIM). The Periplasmic portion of the chain corresponds to 253–310 (KLFYQYEQRFGMRSTSLLNVIGSNTIAIYTTHRILVEIFSLTLLAQMNAARWSPQVEL). Residues 311-331 (TLLLVYPFVSLFICTVAGLLV) traverse the membrane as a helical segment. The Cytoplasmic segment spans residues 332-357 (RKLSQRAFSDLLFSPPSLPAAVSYSR).

This sequence belongs to the acyltransferase 3 family.

It localises to the cell inner membrane. The sequence is that of Inner membrane protein YcfT (ycfT) from Escherichia coli (strain K12).